Consider the following 220-residue polypeptide: Dual specificity phosphatase 29 (220 aa).

The Tyrosine-protein phosphatase domain maps to histidine 54–glutamine 202. Histidine 146–arginine 153 serves as a coordination point for substrate. The Phosphocysteine intermediate role is filled by cysteine 147.

It belongs to the protein-tyrosine phosphatase family. Non-receptor class dual specificity subfamily. Homodimer. Interacts with PRKAA2.

It localises to the cytoplasm. It is found in the nucleus. The catalysed reaction is O-phospho-L-tyrosyl-[protein] + H2O = L-tyrosyl-[protein] + phosphate. The enzyme catalyses O-phospho-L-seryl-[protein] + H2O = L-seryl-[protein] + phosphate. It catalyses the reaction O-phospho-L-threonyl-[protein] + H2O = L-threonyl-[protein] + phosphate. In terms of biological role, dual specificity phosphatase able to dephosphorylate phosphotyrosine, phosphoserine and phosphothreonine residues within the same substrate, with a preference for phosphotyrosine as a substrate. Involved in the modulation of intracellular signaling cascades. In skeletal muscle regulates systemic glucose homeostasis by activating, AMPK, an energy sensor protein kinase. Affects MAP kinase signaling though modulation of the ERK1/2 cascade in skeletal muscle promoting muscle cell differentiation, development and atrophy. The polypeptide is Dual specificity phosphatase 29 (DUSP29) (Pan troglodytes (Chimpanzee)).